The primary structure comprises 323 residues: UPF0065 protein BP0148 (323 aa).

The first 24 residues, 1–24, serve as a signal peptide directing secretion; that stretch reads MKPFSLLRRIATIALLMAASSAHA.

The protein belongs to the UPF0065 (bug) family.

It localises to the periplasm. This Bordetella pertussis (strain Tohama I / ATCC BAA-589 / NCTC 13251) protein is UPF0065 protein BP0148.